Consider the following 121-residue polypeptide: Small ribosomal subunit protein uS13 (121 aa).

Positions 91 to 121 (HRMSLPVRGQRTRTNARTRRGSRKTVAGRKK) are disordered. The span at 100 to 121 (QRTRTNARTRRGSRKTVAGRKK) shows a compositional bias: basic residues.

The protein belongs to the universal ribosomal protein uS13 family. As to quaternary structure, part of the 30S ribosomal subunit. Forms a loose heterodimer with protein S19. Forms two bridges to the 50S subunit in the 70S ribosome.

Located at the top of the head of the 30S subunit, it contacts several helices of the 16S rRNA. In the 70S ribosome it contacts the 23S rRNA (bridge B1a) and protein L5 of the 50S subunit (bridge B1b), connecting the 2 subunits; these bridges are implicated in subunit movement. Contacts the tRNAs in the A and P-sites. In Prochlorococcus marinus (strain SARG / CCMP1375 / SS120), this protein is Small ribosomal subunit protein uS13.